Consider the following 247-residue polypeptide: UDP-2,3-diacylglucosamine hydrolase (247 aa).

Mn(2+)-binding residues include D8, H10, D41, N79, and H114. Residue 79-80 (NR) participates in substrate binding. Substrate is bound by residues D122, S160, D171, Q174, and H202. Positions 202 and 204 each coordinate Mn(2+).

This sequence belongs to the LpxH family. Requires Mn(2+) as cofactor.

Its subcellular location is the cell inner membrane. The enzyme catalyses UDP-2-N,3-O-bis[(3R)-3-hydroxytetradecanoyl]-alpha-D-glucosamine + H2O = 2-N,3-O-bis[(3R)-3-hydroxytetradecanoyl]-alpha-D-glucosaminyl 1-phosphate + UMP + 2 H(+). It participates in glycolipid biosynthesis; lipid IV(A) biosynthesis; lipid IV(A) from (3R)-3-hydroxytetradecanoyl-[acyl-carrier-protein] and UDP-N-acetyl-alpha-D-glucosamine: step 4/6. Functionally, hydrolyzes the pyrophosphate bond of UDP-2,3-diacylglucosamine to yield 2,3-diacylglucosamine 1-phosphate (lipid X) and UMP by catalyzing the attack of water at the alpha-P atom. Involved in the biosynthesis of lipid A, a phosphorylated glycolipid that anchors the lipopolysaccharide to the outer membrane of the cell. This chain is UDP-2,3-diacylglucosamine hydrolase, found in Xanthomonas campestris pv. campestris (strain B100).